An 822-amino-acid chain; its full sequence is Pentatricopeptide repeat-containing protein At2g18940, chloroplastic (822 aa).

Positions 1-42 are disordered; that stretch reads MDGALFPHKPPYPIQSKRPPPSQSSNQSIKFSSATLHLPPPS. Residues 1–77 constitute a chloroplast transit peptide; it reads MDGALFPHKP…SAAARFPSLE (77 aa). Over residues 8–22 the composition is skewed to pro residues; that stretch reads HKPPYPIQSKRPPPS. Positions 23–37 are enriched in low complexity; sequence QSSNQSIKFSSATLH. 17 PPR repeats span residues 209–243, 244–279, 280–314, 315–349, 350–384, 385–419, 420–454, 455–489, 490–524, 525–559, 560–594, 595–629, 630–664, 665–699, 700–734, 735–769, and 770–800; these read DVRAYTTILHAYSRTGKYEKAIDLFERMKEMGPSP, TLVTYNVILDVFGKMGRSWRKILGVLDEMRSKGLKF, DEFTCSTVLSACAREGLLREAKEFFAELKSCGYEP, GTVTYNALLQVFGKAGVYTEALSVLKEMEENSCPA, DSVTYNELVAAYVRAGFSKEAAGVIEMMTKKGVMP, NAITYTTVIDAYGKAGKEDEALKLFYSMKEAGCVP, NTCTYNAVLSLLGKKSRSNEMIKMLCDMKSNGCSP, NRATWNTMLALCGNKGMDKFVNRVFREMKSCGFEP, DRDTFNTLISAYGRCGSEVDASKMYGEMTRAGFNA, CVTTYNALLNALARKGDWRSGENVISDMKSKGFKP, TETSYSLMLQCYAKGGNYLGIERIENRIKEGQIFP, SWMLLRTLLLANFKCRALAGSERAFTLFKKHGYKP, DMVIFNSMLSIFTRNNMYDQAEGILESIREDGLSP, DLVTYNSLMDMYVRRGECWKAEEILKTLEKSQLKP, DLVSYNTVIKGFCRRGLMQEAVRMLSEMTERGIRP, CIFTYNTFVSGYTAMGMFAEIEDVIECMAKNDCRP, and NELTFKMVVDGYCRAGKYSEAMDFVSKIKTF.

This sequence belongs to the PPR family. P subfamily.

It localises to the plastid. The protein resides in the chloroplast. This Arabidopsis thaliana (Mouse-ear cress) protein is Pentatricopeptide repeat-containing protein At2g18940, chloroplastic.